Reading from the N-terminus, the 427-residue chain is UPF0761 membrane protein Plut_1323 (427 aa).

6 helical membrane passes run 51 to 71, 105 to 125, 147 to 167, 188 to 208, 221 to 241, and 251 to 271; these read LLSI…FAVF, TFTM…VLIS, FTLY…SLAA, LLSL…YLLV, GALV…FYVA, and GALS…VVVL.

The protein belongs to the UPF0761 family.

Its subcellular location is the cell inner membrane. The chain is UPF0761 membrane protein Plut_1323 from Chlorobium luteolum (strain DSM 273 / BCRC 81028 / 2530) (Pelodictyon luteolum).